The following is a 485-amino-acid chain: Protein disulfide isomerase-like 5-4 (485 aa).

Residues 114–263 enclose the Thioredoxin domain; it reads VPTGSEFHPG…LVAAMETYVA (150 aa). C170 functions as the Nucleophile in the catalytic mechanism. Residues 444 to 464 traverse the membrane as a helical segment; it reads FSHFITNVCAIIGGVFTVAGI.

This sequence belongs to the protein disulfide isomerase family.

It is found in the membrane. Acts as a protein-folding catalyst that interacts with nascent polypeptides to catalyze the formation, isomerization, and reduction or oxidation of disulfide bonds. May play a role in storage protein biogenesis. The sequence is that of Protein disulfide isomerase-like 5-4 (PDIL5-4) from Oryza sativa subsp. japonica (Rice).